Here is a 192-residue protein sequence, read N- to C-terminus: MLLANTAAAVLLLIVCIGASVGLPTVDEENVVQAEQLPILPTADSSKPTDDTVKAIAPQPRYLLPADFAVKNKKFTIGTLGVGSFFRAWRNCIDEGKGLATIESEKEQKYLESLLKASSTGSNYWIGATNIGASNTNKLTWITTDLPVQTKPPFLNVVAKSTCIALTPTGSWTLRNCLNPLNIFPYICEEYF.

An N-terminal signal peptide occupies residues 1–22; it reads MLLANTAAAVLLLIVCIGASVG. The 116-residue stretch at 71–186 folds into the C-type lectin domain; sequence KNKKFTIGTL…CLNPLNIFPY (116 aa). An intrachain disulfide couples C163 to C177.

In terms of tissue distribution, expressed in the gut of adults.

The chain is Protein A16 (CTL3) from Anopheles gambiae (African malaria mosquito).